Reading from the N-terminus, the 751-residue chain is Adhesive plaque matrix protein (751 aa).

The first 20 residues, 1 to 20, serve as a signal peptide directing secretion; that stretch reads MEGIKLNLCLLCIFTCDILG. A nonrepetitive linker region spans residues 21–41; sequence FSNGNIYNAHGSAYAGASAGA. Repeat copies occupy residues 109–118, 119–128, 129–138, 139–148, 149–158, 159–168, 169–178, 179–188, 189–198, 199–208, 209–218, 219–228, 229–238, 239–248, 249–258, 259–268, 269–278, 279–288, 289–298, 299–308, 309–318, 319–328, 329–338, 339–348, 349–358, 359–368, 369–378, 379–388, 389–398, 399–408, 409–418, 419–428, 429–438, 439–448, 449–458, 459–468, 469–478, 479–488, 489–498, 499–508, 509–518, 519–528, 529–538, 539–548, 549–558, 559–568, 569–578, 579–588, 589–598, 599–608, 609–618, 619–628, 629–638, 639–648, and 649–658. A 63 X 10 AA tandem repeats of Y-[KR]-[APTS]-K-[KPMSLTIVA]-[STR]-Y-[PLS]-[PASRQT]-[STI] region spans residues 109 to 732; that stretch reads YKPKMTYPPT…YKPKPSYPPT (624 aa). The span at 158 to 167 shows a compositional bias: low complexity; the sequence is TYKPKLTYPP. The disordered stretch occupies residues 158 to 359; the sequence is TYKPKLTYPP…KPKTTYPPSY (202 aa). Residues 168–184 show a composition bias toward pro residues; that stretch reads TYKPKPSYPPTYKPKPS. A compositionally biased stretch (low complexity) spans 185-262; that stretch reads YPATYKSKSS…KTYPSTYKPK (78 aa). 2 stretches are compositionally biased toward low complexity: residues 288-343 and 350-359; these read TYKA…KAKP and KPKTTYPPSY. Positions 397–636 are disordered; that stretch reads PTYKAKPSYP…PTYKAKPSYP (240 aa). Positions 444-486 are enriched in low complexity; that stretch reads SYPPTYKAKPSYPPTYKAKPSYPPTYKAKPSYPPTYKTKPSYP. The stretch at 659 to 662 is one 56; truncated repeat; that stretch reads YPST. Residues 660–751 are disordered; the sequence is PSTYKAKPSY…KKKISYPSQY (92 aa). The segment covering 662 to 677 has biased composition (low complexity); sequence TYKAKPSYPPTYKAKP. Repeat copies occupy residues 663-672, 673-682, 683-692, 693-702, 703-712, 713-722, and 723-732. A compositionally biased stretch (pro residues) spans 678-690; it reads SYPPTYKPKPSYP. The segment covering 691-721 has biased composition (low complexity); it reads PTYKSKSSYPSSYKPKKTYPPTYKPKLTYPP.

Hydroxylated on proline (mono- or dihydroxylation) and tyrosine residues (to L-DOPA = 3',4'-dihydroxyphenylalanine) of the tandem repeats. Produced by the byssal gland.

Its subcellular location is the secreted. In terms of biological role, provides adhesiveness to the mussel's foot. Mussels produce one of the strongest water insoluble glues. The mussel's adhesive is a bundle of threads, called a byssus, formed by a fibrous collagenous core coated with adhesive proteins. The sequence is that of Adhesive plaque matrix protein (FP1) from Mytilus galloprovincialis (Mediterranean mussel).